Here is a 166-residue protein sequence, read N- to C-terminus: EndA-like protein (166 aa).

Belongs to the tRNA-intron endonuclease family. Archaeal short subfamily.

The chain is EndA-like protein from Methanopyrus kandleri (strain AV19 / DSM 6324 / JCM 9639 / NBRC 100938).